Consider the following 192-residue polypeptide: Xanthine phosphoribosyltransferase (192 aa).

The xanthine site is built by Leu20 and Asn27. A 5-phospho-alpha-D-ribose 1-diphosphate-binding site is contributed by 128-132 (ANGQA). Lys156 contributes to the xanthine binding site.

Belongs to the purine/pyrimidine phosphoribosyltransferase family. Xpt subfamily. In terms of assembly, homodimer.

Its subcellular location is the cytoplasm. The catalysed reaction is XMP + diphosphate = xanthine + 5-phospho-alpha-D-ribose 1-diphosphate. Its pathway is purine metabolism; XMP biosynthesis via salvage pathway; XMP from xanthine: step 1/1. Converts the preformed base xanthine, a product of nucleic acid breakdown, to xanthosine 5'-monophosphate (XMP), so it can be reused for RNA or DNA synthesis. The chain is Xanthine phosphoribosyltransferase from Listeria innocua serovar 6a (strain ATCC BAA-680 / CLIP 11262).